Reading from the N-terminus, the 359-residue chain is Alanine racemase, biosynthetic (359 aa).

The Proton acceptor; specific for D-alanine role is filled by Lys-34. Lys-34 is subject to N6-(pyridoxal phosphate)lysine. Arg-129 is a binding site for substrate. The active-site Proton acceptor; specific for L-alanine is Tyr-255. Substrate is bound at residue Met-303.

It belongs to the alanine racemase family. In terms of assembly, monomer but homodimer in the presence of the substrate. Requires pyridoxal 5'-phosphate as cofactor.

It carries out the reaction L-alanine = D-alanine. The protein operates within amino-acid biosynthesis; D-alanine biosynthesis; D-alanine from L-alanine: step 1/1. Its pathway is cell wall biogenesis; peptidoglycan biosynthesis. Catalyzes the interconversion of L-alanine and D-alanine. The protein is Alanine racemase, biosynthetic (alr) of Shigella sonnei.